Reading from the N-terminus, the 124-residue chain is Kinocilin (124 aa).

2 helical membrane passes run 13–33 and 40–60; these read LQLA…GISV and MGGV…YPFL. A disordered region spans residues 80-124; sequence PHPGADHGEGRSSTNGNKEGARSSLSTVSRTLEKLKPGTRGAEEC. The span at 90-109 shows a compositional bias: polar residues; the sequence is RSSTNGNKEGARSSLSTVSR. Residues 110–124 show a composition bias toward basic and acidic residues; the sequence is TLEKLKPGTRGAEEC.

It localises to the membrane. In terms of biological role, may play a role in stabilizing dense microtubular networks or in vesicular trafficking. The chain is Kinocilin (KNCN) from Homo sapiens (Human).